Reading from the N-terminus, the 436-residue chain is ATP-dependent RNA helicase RhlB (436 aa).

Residues 9–37 (QKFADFPLHKEVHQALNEAGFEFCTPIQA) carry the Q motif motif. In terms of domain architecture, Helicase ATP-binding spans 40–219 (LPILLEKKDI…YDHMNEPEKV (180 aa)). ATP is bound at residue 53–60 (AQTGTGKT). A DEAD box motif is present at residues 165 to 168 (DEAD). Residues 243 to 390 (KMPLLLSLLE…VTSYDSDALL (148 aa)) form the Helicase C-terminal domain. The interval 392 to 436 (DIPPPVRIHRKPSTHTRNTRDRSSGRPQGGQRNGPRRHDKTRRHS) is disordered. Over residues 425-436 (GPRRHDKTRRHS) the composition is skewed to basic residues.

This sequence belongs to the DEAD box helicase family. RhlB subfamily. Component of the RNA degradosome, which is a multiprotein complex involved in RNA processing and mRNA degradation.

Its subcellular location is the cytoplasm. The catalysed reaction is ATP + H2O = ADP + phosphate + H(+). Its function is as follows. DEAD-box RNA helicase involved in RNA degradation. Has RNA-dependent ATPase activity and unwinds double-stranded RNA. This Shewanella pealeana (strain ATCC 700345 / ANG-SQ1) protein is ATP-dependent RNA helicase RhlB.